The sequence spans 387 residues: O-methyltransferase asqD (387 aa).

Position 252 (Asp-252) interacts with S-adenosyl-L-methionine. Catalysis depends on His-294, which acts as the Proton acceptor.

Belongs to the class I-like SAM-binding methyltransferase superfamily. Cation-independent O-methyltransferase family.

It functions in the pathway secondary metabolite biosynthesis. It participates in alkaloid biosynthesis. The protein operates within mycotoxin biosynthesis. In terms of biological role, O-methyltransferase; part of the gene cluster that mediates the biosynthesis of the aspoquinolone mycotoxins. The role of asqD within the aspoquinolone pathway has still to be determined. The first step of the pathway is catalyzed by the nonribosomal peptide synthetase asqK that condenses anthranilic acid and O-methyl-L-tyrosine to produce 4'-methoxycyclopeptin. 4'-methoxycyclopeptin is then converted to 4'-methoxydehydrocyclopeptin by the ketoglutarate-dependent dioxygenase asqJ. AsqJ also converts its first product 4'-methoxydehydrocyclopeptin to 4'-methoxycyclopenin. The following conversion of 4'-methoxycyclopenin into 4'-methoxyviridicatin is catalyzed by the cyclopenase asqI. 4'-methoxyviridicatin is the precursor of quinolone natural products, and is further converted to quinolinone B. The prenyltransferase asqH1 then catalyzes the canonical Friedel-Crafts alkylation of quinolinone B with dimethylallyl cation to yield dimethylallyl quinolone, which is subjected to FAD-dependent dehydrogenation by the FAD-linked oxidoreductase asqF to yield conjugated aryl diene. The delta(3') double bond then serves as the site of the second alkylation with DMAPP catalyzed by the prenyltransferase asqH2 to yield a carbenium ion intermediate, which can be attacked by H(2)O to yield a styrenyl quinolone containing a C3'-hydroxyprenyl chain. The FAD-dependent monooxygenase asqG performs epoxidation of the terminal C7'-C8' olefin. Finally, after dehydratation of the epoxide at C3 by asqC, the quinolone epoxide rearrangement protein asqO catalyzes an enzymatic 3-exo-tet cyclization to yield the cyclopropyl-THF ring system in aspoquinolone. The chain is O-methyltransferase asqD from Emericella nidulans (strain FGSC A4 / ATCC 38163 / CBS 112.46 / NRRL 194 / M139) (Aspergillus nidulans).